A 375-amino-acid polypeptide reads, in one-letter code: Histidine biosynthesis bifunctional protein HisB (375 aa).

The interval 1–168 is histidinol-phosphatase; the sequence is MTPIVFIDRD…GIAHTLADAP (168 aa). The Nucleophile role is filled by D8. D8, D10, and D128 together coordinate Mg(2+). D10 functions as the Proton donor in the catalytic mechanism. The segment at 169–375 is imidazoleglycerol-phosphate dehydratase; it reads RRAVVQRHTK…HVLPSTKGAL (207 aa).

It in the N-terminal section; belongs to the histidinol-phosphatase family. This sequence in the C-terminal section; belongs to the imidazoleglycerol-phosphate dehydratase family. Mg(2+) is required as a cofactor.

The protein localises to the cytoplasm. The enzyme catalyses D-erythro-1-(imidazol-4-yl)glycerol 3-phosphate = 3-(imidazol-4-yl)-2-oxopropyl phosphate + H2O. It carries out the reaction L-histidinol phosphate + H2O = L-histidinol + phosphate. It participates in amino-acid biosynthesis; L-histidine biosynthesis; L-histidine from 5-phospho-alpha-D-ribose 1-diphosphate: step 6/9. It functions in the pathway amino-acid biosynthesis; L-histidine biosynthesis; L-histidine from 5-phospho-alpha-D-ribose 1-diphosphate: step 8/9. The protein is Histidine biosynthesis bifunctional protein HisB of Xylella fastidiosa (strain Temecula1 / ATCC 700964).